A 208-amino-acid polypeptide reads, in one-letter code: Thymidylate kinase (208 aa).

Residue 10–17 (GPEGSGKS) coordinates ATP.

The protein belongs to the thymidylate kinase family.

The enzyme catalyses dTMP + ATP = dTDP + ADP. Functionally, phosphorylation of dTMP to form dTDP in both de novo and salvage pathways of dTTP synthesis. This Bacillus cytotoxicus (strain DSM 22905 / CIP 110041 / 391-98 / NVH 391-98) protein is Thymidylate kinase.